The chain runs to 257 residues: tRNA pseudouridine synthase A (257 aa).

D43 acts as the Nucleophile in catalysis. Y94 is a binding site for substrate.

It belongs to the tRNA pseudouridine synthase TruA family.

The enzyme catalyses uridine(38/39/40) in tRNA = pseudouridine(38/39/40) in tRNA. In terms of biological role, formation of pseudouridine at positions 38, 39 and 40 in the anticodon stem and loop of transfer RNAs. The polypeptide is tRNA pseudouridine synthase A (Pyrobaculum calidifontis (strain DSM 21063 / JCM 11548 / VA1)).